Consider the following 344-residue polypeptide: tRNA N6-adenosine threonylcarbamoyltransferase (344 aa).

Histidine 113 and histidine 117 together coordinate Fe cation. Residues 135–139, aspartate 169, glycine 182, aspartate 186, and asparagine 278 each bind substrate; that span reads LVSGG. Aspartate 306 is a binding site for Fe cation. Residues 325-344 are disordered; it reads ESPISVGTDPSLSVETPQVF. The span at 326 to 344 shows a compositional bias: polar residues; that stretch reads SPISVGTDPSLSVETPQVF.

The protein belongs to the KAE1 / TsaD family. Requires Fe(2+) as cofactor.

The protein resides in the cytoplasm. The enzyme catalyses L-threonylcarbamoyladenylate + adenosine(37) in tRNA = N(6)-L-threonylcarbamoyladenosine(37) in tRNA + AMP + H(+). Required for the formation of a threonylcarbamoyl group on adenosine at position 37 (t(6)A37) in tRNAs that read codons beginning with adenine. Is involved in the transfer of the threonylcarbamoyl moiety of threonylcarbamoyl-AMP (TC-AMP) to the N6 group of A37, together with TsaE and TsaB. TsaD likely plays a direct catalytic role in this reaction. The chain is tRNA N6-adenosine threonylcarbamoyltransferase from Corynebacterium glutamicum (strain R).